We begin with the raw amino-acid sequence, 244 residues long: ATP synthase subunit b 2 (244 aa).

Residues 2–22 (LIDWFTIVAQIINFLILVFLL) traverse the membrane as a helical segment.

This sequence belongs to the ATPase B chain family. In terms of assembly, F-type ATPases have 2 components, F(1) - the catalytic core - and F(0) - the membrane proton channel. F(1) has five subunits: alpha(3), beta(3), gamma(1), delta(1), epsilon(1). F(0) has four main subunits: a(1), b(1), b'(1) and c(10-14). The alpha and beta chains form an alternating ring which encloses part of the gamma chain. F(1) is attached to F(0) by a central stalk formed by the gamma and epsilon chains, while a peripheral stalk is formed by the delta, b and b' chains.

It is found in the cellular thylakoid membrane. Its function is as follows. F(1)F(0) ATP synthase produces ATP from ADP in the presence of a proton or sodium gradient. F-type ATPases consist of two structural domains, F(1) containing the extramembraneous catalytic core and F(0) containing the membrane proton channel, linked together by a central stalk and a peripheral stalk. During catalysis, ATP synthesis in the catalytic domain of F(1) is coupled via a rotary mechanism of the central stalk subunits to proton translocation. Functionally, component of the F(0) channel, it forms part of the peripheral stalk, linking F(1) to F(0). This Crocosphaera subtropica (strain ATCC 51142 / BH68) (Cyanothece sp. (strain ATCC 51142)) protein is ATP synthase subunit b 2.